A 375-amino-acid chain; its full sequence is Filamin-binding LIM protein 1 (375 aa).

Residues 1 to 69 are filamin-binding; the sequence is MASKPEKRVA…KTWTPSGKTN (69 aa). The segment at 40–176 is disordered; it reads ARPWEMLPTK…PPPEEPVTLP (137 aa). Positions 60–83 are enriched in polar residues; sequence KTWTPSGKTNASLSGVTPQLSNGG. Composition is skewed to pro residues over residues 98-107 and 133-144; these read LPPPPPPPSA and LPPPPPPPPPQA. 3 LIM zinc-binding domains span residues 183–244, 245–302, and 303–372; these read DVCG…TLEK, CGKC…RKFA, and PVCS…RSAA. The segment at 278–375 is FERMT2-binding; it reads ISDESFALDS…HLKRSAAGCC (98 aa).

Interacts with FERMT2, FLNA, FLNB and FLNC. Interacts with NKX2-5.

It localises to the cell junction. The protein resides in the focal adhesion. The protein localises to the cytoplasm. It is found in the cytoskeleton. Its subcellular location is the stress fiber. Its function is as follows. Serves as an anchoring site for cell-ECM adhesion proteins and filamin-containing actin filaments. Is implicated in cell shape modulation (spreading) and motility. May participate in the regulation of filamin-mediated cross-linking and stabilization of actin filaments. May also regulate the assembly of filamin-containing signaling complexes that control actin assembly. Promotes dissociation of FLNA from ITGB3 and ITGB7. Promotes activation of integrins and regulates integrin-mediated cell-cell adhesion. The chain is Filamin-binding LIM protein 1 (Fblim1) from Mus musculus (Mouse).